We begin with the raw amino-acid sequence, 390 residues long: Pre-mycofactocin synthase (390 aa).

Residues 1–383 form the FMN hydroxy acid dehydrogenase domain; it reads MADEWFETVA…RSDDILIPAD (383 aa). 4 residues coordinate FMN: serine 108, glutamine 128, threonine 156, and lysine 254. Histidine 278 (proton acceptor) is an active-site residue. FMN contacts are provided by residues 309–313 and 332–333; these read DGGIR and GR.

The protein belongs to the FMN-dependent alpha-hydroxy acid dehydrogenase family. FMN is required as a cofactor.

It catalyses the reaction 3-amino-5-[(4-hydroxyphenyl)methyl]-4,4-dimethyl-2-pyrrolidin-2-one + O2 + H2O = pre-mycofactocin + H2O2 + NH4(+). In terms of biological role, involved in the biosynthesis of the enzyme cofactor mycofactocin (MFT). Catalyzes the oxidative deamination of AHDP (3-amino-5-[(4-hydroxyphenyl)methyl]-4,4-dimethyl-2-pyrrolidin-2-one), forming an alpha-keto amide moiety on the resulting molecule, which is called pre-mycofactocin (PMFT). This reaction occurs via a 5-[(4-hydroxyphenyl)methyl]-3-imino-4,4-dimethylpyrrolidin-2-one intermediate, which converts to PMFT. The alpha-keto amide moiety is the redox-active center for the redox activity of mycofactocin. The chain is Pre-mycofactocin synthase from Mycobacterium ulcerans (strain Agy99).